Here is a 224-residue protein sequence, read N- to C-terminus: EF-hand calcium-binding domain-containing protein 1 (224 aa).

A signal peptide spans methionine 1 to serine 21. The EF-hand domain occupies isoleucine 115–aspartate 150. Ca(2+) is bound by residues aspartate 128, aspartate 130, aspartate 132, glutamate 134, and glutamate 139.

In terms of tissue distribution, component of the acid-soluble organic matrix of calcified layers of the shell (at protein level).

Its subcellular location is the secreted. The polypeptide is EF-hand calcium-binding domain-containing protein 1 (Lottia gigantea (Giant owl limpet)).